The primary structure comprises 142 residues: ATP synthase epsilon chain (142 aa).

Belongs to the ATPase epsilon chain family. As to quaternary structure, F-type ATPases have 2 components, CF(1) - the catalytic core - and CF(0) - the membrane proton channel. CF(1) has five subunits: alpha(3), beta(3), gamma(1), delta(1), epsilon(1). CF(0) has three main subunits: a, b and c.

It is found in the cell inner membrane. Produces ATP from ADP in the presence of a proton gradient across the membrane. The chain is ATP synthase epsilon chain from Shewanella pealeana (strain ATCC 700345 / ANG-SQ1).